Here is a 179-residue protein sequence, read N- to C-terminus: MSRLKEKFNTEVTENLMKEFNYSSVMEVPKIDKIVVNMGVGDAVQNSKVLDNAVEELELITGQKPLITKAKKSVATFRLREGMPIGAKVTLRGDRMYEFLDKLIAVSLPRVRDFHGVSKKAFDGRGNYTLGIKEQLIFPEIDYDKVSKVRGMDIVIVTTANTDEEGRELLKQFGMPFQK.

This sequence belongs to the universal ribosomal protein uL5 family. In terms of assembly, part of the 50S ribosomal subunit; part of the 5S rRNA/L5/L18/L25 subcomplex. Contacts the 5S rRNA and the P site tRNA. Forms a bridge to the 30S subunit in the 70S ribosome.

Its function is as follows. This is one of the proteins that bind and probably mediate the attachment of the 5S RNA into the large ribosomal subunit, where it forms part of the central protuberance. In the 70S ribosome it contacts protein S13 of the 30S subunit (bridge B1b), connecting the 2 subunits; this bridge is implicated in subunit movement. Contacts the P site tRNA; the 5S rRNA and some of its associated proteins might help stabilize positioning of ribosome-bound tRNAs. This Staphylococcus carnosus (strain TM300) protein is Large ribosomal subunit protein uL5.